Here is an 80-residue protein sequence, read N- to C-terminus: Large ribosomal subunit protein uL29 (80 aa).

Belongs to the universal ribosomal protein uL29 family.

The polypeptide is Large ribosomal subunit protein uL29 (rpmC) (Mycobacterium leprae (strain TN)).